The sequence spans 318 residues: MVSANQTASVTEFILLGLSAHPKLEKTFFVLILLMYLVILLGNGVLILMTVSNSHLHMPMYFFLGNLSFLDICYTTSSVPLILDSFLTPRKTISFSACAVQMFLSFAMGATECVLLSMMAFDRYVAICNPLRYPVVMSKAAYMPKAAGSWVAGSTASMVQTSLAMRLPFCGDNIINHFTCEILAVLKLACADISVNVISMGVTNVIFLGVPVLFISFSYVFIIATILRIPSAEGRKKAFSTCSAHLTVVVIFYGTILFMYGKPKSKDPLGADKQDLADKLISLFYGVVTPMLNPIIYSLRNKDVKAAVRDLIFQKCFA.

Topologically, residues 1 to 27 are extracellular; that stretch reads MVSANQTASVTEFILLGLSAHPKLEKT. The chain crosses the membrane as a helical span at residues 28-48; it reads FFVLILLMYLVILLGNGVLIL. The Cytoplasmic portion of the chain corresponds to 49-61; the sequence is MTVSNSHLHMPMY. Residues 62–82 traverse the membrane as a helical segment; the sequence is FFLGNLSFLDICYTTSSVPLI. The Extracellular segment spans residues 83–100; it reads LDSFLTPRKTISFSACAV. A helical membrane pass occupies residues 101-121; it reads QMFLSFAMGATECVLLSMMAF. Residues 122-181 lie on the Cytoplasmic side of the membrane; sequence DRYVAICNPLRYPVVMSKAAYMPKAAGSWVAGSTASMVQTSLAMRLPFCGDNIINHFTCE. Residues 182–202 traverse the membrane as a helical segment; it reads ILAVLKLACADISVNVISMGV. Topologically, residues 203–205 are extracellular; the sequence is TNV. The helical transmembrane segment at 206-226 threads the bilayer; that stretch reads IFLGVPVLFISFSYVFIIATI. Residues 227-238 lie on the Cytoplasmic side of the membrane; the sequence is LRIPSAEGRKKA. The helical transmembrane segment at 239–259 threads the bilayer; it reads FSTCSAHLTVVVIFYGTILFM. The Extracellular portion of the chain corresponds to 260 to 278; it reads YGKPKSKDPLGADKQDLAD. A helical transmembrane segment spans residues 279–289; sequence KLISLFYGVVT. Residues 290–318 lie on the Cytoplasmic side of the membrane; the sequence is PMLNPIIYSLRNKDVKAAVRDLIFQKCFA.

The protein belongs to the G-protein coupled receptor 1 family.

The protein resides in the cell membrane. Its function is as follows. Odorant receptor. The chain is Olfactory receptor 13C7 from Homo sapiens (Human).